A 76-amino-acid polypeptide reads, in one-letter code: Small ribosomal subunit protein bS18 (76 aa).

The protein belongs to the bacterial ribosomal protein bS18 family. In terms of assembly, part of the 30S ribosomal subunit. Forms a tight heterodimer with protein bS6.

In terms of biological role, binds as a heterodimer with protein bS6 to the central domain of the 16S rRNA, where it helps stabilize the platform of the 30S subunit. In Pseudomonas entomophila (strain L48), this protein is Small ribosomal subunit protein bS18.